Here is a 185-residue protein sequence, read N- to C-terminus: uncharacterized protein (185 aa).

Transmembrane regions (helical) follow at residues 32-52, 66-86, and 155-175; these read LIFVPDSPTATFFFLFVLLAF, LVTLVKYGLWAVAMNFLVLAV, and IGYGTFWLSIFSIALAYFLVV.

Its subcellular location is the cell membrane. This is an uncharacterized protein from Bacillus subtilis (strain 168).